Reading from the N-terminus, the 331-residue chain is Homeobox protein DBX1 (331 aa).

Disordered stretches follow at residues 56–94 (RAVPPPSMSPPTSESPNCMSETSDLARREGPNQTSISSN) and 232–331 (KERE…ITVS). Residues 173–232 (GMLRRAVFSDVQRKALEKMFQKQKYISKPDRKKLAGKLGLKDSQVKIWFQNRRMKWRNSK) constitute a DNA-binding region (homeobox). The segment covering 256–266 (DLSDVSKKSSG) has biased composition (basic and acidic residues). A compositionally biased stretch (low complexity) spans 299–314 (PSSPFNSSSASKPSDF). The span at 315–331 (SDSEEEGGEQEEEITVS) shows a compositional bias: acidic residues.

The protein belongs to the H2.0 homeobox family.

The protein resides in the nucleus. Functionally, may function within the midpoint progenitor population to inhibit neuronal differentiation, possibly through modulating the function of Xash3. This Xenopus laevis (African clawed frog) protein is Homeobox protein DBX1 (dbx1).